The chain runs to 616 residues: UvrABC system protein C (616 aa).

The region spanning 21–100 is the GIY-YIG domain; the sequence is TCPGVYQFKN…IKDLKPRYNI (80 aa). The region spanning 214–249 is the UVR domain; the sequence is GALIRTLSAEMHRYADELRFEEAAELKIQIEGLRKY.

It belongs to the UvrC family. Interacts with UvrB in an incision complex.

The protein localises to the cytoplasm. The UvrABC repair system catalyzes the recognition and processing of DNA lesions. UvrC both incises the 5' and 3' sides of the lesion. The N-terminal half is responsible for the 3' incision and the C-terminal half is responsible for the 5' incision. In Prosthecochloris aestuarii (strain DSM 271 / SK 413), this protein is UvrABC system protein C.